The following is a 382-amino-acid chain: Polyadenylate-binding protein 5 (382 aa).

RRM domains lie at 18–96 (AALY…WSQP), 106–182 (GNIF…RFKF), 199–276 (TNVF…RAQK), and 302–378 (VPIY…LGQA).

The protein resides in the cytoplasm. Functionally, binds the poly(A) tail of mRNA. May be involved in cytoplasmic regulatory processes of mRNA metabolism. Can probably bind to cytoplasmic RNA sequences other than poly(A) in vivo. The chain is Polyadenylate-binding protein 5 (PABPC5) from Gorilla gorilla gorilla (Western lowland gorilla).